The sequence spans 162 residues: Ribosome maturation factor RimM (162 aa).

In terms of domain architecture, PRC barrel spans 91–162; it reads DGSFYIDDLI…LIDVVIIEGM (72 aa).

Belongs to the RimM family. As to quaternary structure, binds ribosomal protein uS19.

Its subcellular location is the cytoplasm. Functionally, an accessory protein needed during the final step in the assembly of 30S ribosomal subunit, possibly for assembly of the head region. Essential for efficient processing of 16S rRNA. May be needed both before and after RbfA during the maturation of 16S rRNA. It has affinity for free ribosomal 30S subunits but not for 70S ribosomes. In Finegoldia magna (strain ATCC 29328 / DSM 20472 / WAL 2508) (Peptostreptococcus magnus), this protein is Ribosome maturation factor RimM.